Reading from the N-terminus, the 95-residue chain is Synaptobrevin-A (95 aa).

Residues 1–70 (MSEPVNKVKQ…KRLMWCRNIK (70 aa)) lie on the Cytoplasmic side of the membrane. Residues 7–67 (KVKQTQQQVD…NEIKRLMWCR (61 aa)) enclose the v-SNARE coiled-coil homology domain. A helical; Anchor for type IV membrane protein transmembrane segment spans residues 71-91 (LTLIIIAVVVLLLVVIIVPIV). Residues 92-95 (LKFT) lie on the Vesicular side of the membrane.

Belongs to the synaptobrevin family.

The protein localises to the cytoplasmic vesicle. It is found in the secretory vesicle membrane. Functionally, involved in the targeting and/or fusion of transport vesicles to their target membrane. In Dictyostelium discoideum (Social amoeba), this protein is Synaptobrevin-A (sybA).